Consider the following 282-residue polypeptide: Pantothenate synthetase (282 aa).

26–33 serves as a coordination point for ATP; that stretch reads MGNLHDGH. The active-site Proton donor is the histidine 33. Glutamine 57 serves as a coordination point for (R)-pantoate. Glutamine 57 contacts beta-alanine. 148–151 is an ATP binding site; it reads GKKD. Glutamine 154 contacts (R)-pantoate. An ATP-binding site is contributed by 185 to 188; it reads LSSR.

Belongs to the pantothenate synthetase family. In terms of assembly, homodimer.

The protein localises to the cytoplasm. The enzyme catalyses (R)-pantoate + beta-alanine + ATP = (R)-pantothenate + AMP + diphosphate + H(+). It participates in cofactor biosynthesis; (R)-pantothenate biosynthesis; (R)-pantothenate from (R)-pantoate and beta-alanine: step 1/1. Catalyzes the condensation of pantoate with beta-alanine in an ATP-dependent reaction via a pantoyl-adenylate intermediate. The chain is Pantothenate synthetase from Polaromonas sp. (strain JS666 / ATCC BAA-500).